We begin with the raw amino-acid sequence, 88 residues long: Small ribosomal subunit protein uS15 (88 aa).

It belongs to the universal ribosomal protein uS15 family. As to quaternary structure, part of the 30S ribosomal subunit. Forms a bridge to the 50S subunit in the 70S ribosome, contacting the 23S rRNA.

In terms of biological role, one of the primary rRNA binding proteins, it binds directly to 16S rRNA where it helps nucleate assembly of the platform of the 30S subunit by binding and bridging several RNA helices of the 16S rRNA. Functionally, forms an intersubunit bridge (bridge B4) with the 23S rRNA of the 50S subunit in the ribosome. The sequence is that of Small ribosomal subunit protein uS15 from Mycoplasmopsis pulmonis (strain UAB CTIP) (Mycoplasma pulmonis).